Here is a 402-residue protein sequence, read N- to C-terminus: N-acetyllactosaminide beta-1,6-N-acetylglucosaminyl-transferase (402 aa).

The Cytoplasmic portion of the chain corresponds to 1–7 (MMGSWKH). The helical; Signal-anchor for type II membrane protein transmembrane segment at 8–23 (CLFSASLISALIFVFV) threads the bilayer. Topologically, residues 24-400 (YNTELWENKR…QSETAIQPSW (377 aa)) are lumenal. N-linked (GlcNAc...) asparagine glycosylation is present at Asn41.

The protein belongs to the glycosyltransferase 14 family. Expressed in lens epithelium cells. In terms of tissue distribution, expressed in reticulocytes.

It localises to the golgi apparatus membrane. The enzyme catalyses a beta-D-Gal-(1-&gt;4)-beta-D-GlcNAc-(1-&gt;3)-beta-D-Gal-(1-&gt;4)-beta-D-GlcNAc derivative + UDP-N-acetyl-alpha-D-glucosamine = a beta-D-Gal-(1-&gt;4)-beta-D-GlcNAc-(1-&gt;3)-[beta-D-GlcNAc-(1-&gt;6)]-beta-D-Gal-(1-&gt;4)-N-acetyl-beta-D-glucosaminyl derivative + UDP + H(+). It participates in protein modification; protein glycosylation. In terms of biological role, branching enzyme that converts linear into branched poly-N-acetyllactosaminoglycans. Introduces the blood group I antigen during embryonic development. It is closely associated with the development and maturation of erythroid cells. Determines the expression of the blood group I antigen in erythrocytes. In Homo sapiens (Human), this protein is N-acetyllactosaminide beta-1,6-N-acetylglucosaminyl-transferase (GCNT2).